The sequence spans 463 residues: Maintenance of mitochondrial morphology protein 1-2 (463 aa).

Residues 1 to 23 lie on the Lumenal side of the membrane; that stretch reads MVIPAELIQKALKQQSGWGFTEG. Residues 24–44 form a helical membrane-spanning segment; sequence LVLGQLSVIITVIIILKFVIF. The Cytoplasmic portion of the chain corresponds to 45–463; it reads AENKSPKKGN…TGADTASGSS (419 aa). Positions 72-152 are disordered; sequence GGQTANGVKT…VAGSTSNLAV (81 aa). A compositionally biased stretch (polar residues) spans 108 to 122; that stretch reads RPGSSRVSMVRSTSG. An SMP-LTD domain is found at 205-435; the sequence is APESLDWFNV…EPHQMIFILP (231 aa).

This sequence belongs to the MMM1 family. As to quaternary structure, homodimer. Component of the ER-mitochondria encounter structure (ERMES) or MDM complex, composed of MMM1, MDM10, MDM12 and MDM34. An MMM1 homodimer associates with one molecule of MDM12 on each side in a pairwise head-to-tail manner, and the SMP-LTD domains of MMM1 and MDM12 generate a continuous hydrophobic tunnel for phospholipid trafficking.

The protein localises to the endoplasmic reticulum membrane. Its function is as follows. Component of the ERMES/MDM complex, which serves as a molecular tether to connect the endoplasmic reticulum (ER) and mitochondria. Components of this complex are involved in the control of mitochondrial shape and protein biogenesis, and function in nonvesicular lipid trafficking between the ER and mitochondria. The MDM12-MMM1 subcomplex functions in the major beta-barrel assembly pathway that is responsible for biogenesis of all outer membrane beta-barrel proteins, and acts in a late step after the SAM complex. The MDM10-MDM12-MMM1 subcomplex further acts in the TOM40-specific pathway after the action of the MDM12-MMM1 complex. Essential for establishing and maintaining the structure of mitochondria and maintenance of mtDNA nucleoids. This chain is Maintenance of mitochondrial morphology protein 1-2, found in Yarrowia lipolytica (strain CLIB 122 / E 150) (Yeast).